We begin with the raw amino-acid sequence, 475 residues long: Luvungin A synthase CYP716AC1 (475 aa).

The chain crosses the membrane as a helical span at residues 3-23 (FIILSLLLLSLALYSLYYVII). Cys-423 provides a ligand contact to heme.

Belongs to the cytochrome P450 family. Heme is required as a cofactor. As to expression, expressed in flowers, maturing fruits and in juice vesicles.

The protein localises to the membrane. It carries out the reaction (21S)-21-acetoxyl-apo-melianone + reduced [NADPH--hemoprotein reductase] + O2 = luvungin A + oxidized [NADPH--hemoprotein reductase] + H2O + H(+). The protein operates within secondary metabolite biosynthesis; terpenoid biosynthesis. Its function is as follows. Monooxygenase involved in the biosynthesis of limonoids triterpene natural products such as limonin, a compound with insecticidal activity responsible for the bitter taste in citrus. Catalyzes the conversion of (21S)-21-acetoxyl-apo-melianone to luvungin A. This Citrus sinensis (Sweet orange) protein is Luvungin A synthase CYP716AC1.